Consider the following 217-residue polypeptide: Cytochrome b5 domain-containing protein 1 (217 aa).

The 67-residue stretch at 6–72 (PRFYTPREVS…NPKTGDVKTH (67 aa)) folds into the Cytochrome b5 heme-binding domain. Residues H41 and H72 each coordinate heme.

The protein belongs to the cytochrome b5 family.

It localises to the cytoplasm. Its subcellular location is the cytoskeleton. It is found in the cilium axoneme. In terms of biological role, radial spoke stalk protein that binds heme under oxidizing conditions. Required for the coordinated beating of multiple cilia maybe by functioning in a redox signaling pathway. The polypeptide is Cytochrome b5 domain-containing protein 1 (cyb5d1) (Xenopus tropicalis (Western clawed frog)).